A 92-amino-acid chain; its full sequence is Phosphoribosyl-ATP pyrophosphatase (92 aa).

Belongs to the PRA-PH family.

It is found in the cytoplasm. It catalyses the reaction 1-(5-phospho-beta-D-ribosyl)-ATP + H2O = 1-(5-phospho-beta-D-ribosyl)-5'-AMP + diphosphate + H(+). It functions in the pathway amino-acid biosynthesis; L-histidine biosynthesis; L-histidine from 5-phospho-alpha-D-ribose 1-diphosphate: step 2/9. The protein is Phosphoribosyl-ATP pyrophosphatase of Leptospira biflexa serovar Patoc (strain Patoc 1 / ATCC 23582 / Paris).